The following is a 46-amino-acid chain: Daisho2 (46 aa).

Residues 1 to 22 (MNCLKICGFFFALIAALATAEA) form the signal peptide.

As to expression, hemolymph (at protein level).

The protein localises to the secreted. In terms of biological role, peptide which plays a role in the humoral immune response to a subset of filamentous fungi, including F.oxysporum and F.verticillioides. This chain is Daisho2, found in Drosophila melanogaster (Fruit fly).